A 123-amino-acid chain; its full sequence is WAP four-disulfide core domain protein 5 (123 aa).

A signal peptide spans 1-24 (MRIQSLLLLGALLAVGSQLPAVFG). WAP domains lie at 27–73 (KGEK…CVPR) and 74–121 (VSVK…RDPA). Cystine bridges form between cysteine 34–cysteine 62, cysteine 41–cysteine 66, cysteine 49–cysteine 61, cysteine 55–cysteine 70, cysteine 81–cysteine 109, cysteine 88–cysteine 113, cysteine 96–cysteine 108, and cysteine 102–cysteine 117.

The protein localises to the secreted. Functionally, putative acid-stable proteinase inhibitor. The polypeptide is WAP four-disulfide core domain protein 5 (WFDC5) (Pongo abelii (Sumatran orangutan)).